A 305-amino-acid polypeptide reads, in one-letter code: Undecaprenyl-diphosphatase (305 aa).

Helical transmembrane passes span 18–38, 55–75, 103–123, 130–150, 187–207, 225–245, 246–266, and 284–304; these read GVTELFPVSSLGHAVLVPALV, YLAFIVGLHVATAAALLVFFW, WLIVVGTIPVGLAGLALEQLF, PVPAAAFLLLNSVALYAGEVL, GVLIGAAQILALLPGISRSGI, FSFLLATPIILAAGVYKIPEL, FGPLGAGIGGQVLAGSIASFV, and LTPFAIYCAVAGGASLVWLAL.

The protein belongs to the UppP family.

The protein resides in the cell membrane. The catalysed reaction is di-trans,octa-cis-undecaprenyl diphosphate + H2O = di-trans,octa-cis-undecaprenyl phosphate + phosphate + H(+). Catalyzes the dephosphorylation of undecaprenyl diphosphate (UPP). Confers resistance to bacitracin. In Mycobacterium avium (strain 104), this protein is Undecaprenyl-diphosphatase.